Reading from the N-terminus, the 399-residue chain is Lovastatin esterase (399 aa).

Catalysis depends on Ser57, which acts as the Nucleophile. Residues Lys60 and Tyr170 each act as proton acceptor in the active site.

The protein belongs to the class-A beta-lactamase family.

It catalyses the reaction lovastatin + H2O = monacolin J + (S)-2-methylbutanoate + H(+). The enzyme catalyses pravastatin lactone + H2O = pravastatin diol lactone + (S)-2-methylbutanoate + H(+). The catalysed reaction is mevastatin + H2O = compactin diol lactone + (S)-2-methylbutanoate + H(+). Esterase that can hydrolyze the side chain of lovastatin to produce monacolin J. Is also able to hydrolyze the side chains of mevastatin and pravastatin, but not simvastatin. The protein is Lovastatin esterase of Penicillium rubens (strain ATCC 28089 / DSM 1075 / NRRL 1951 / Wisconsin 54-1255) (Penicillium chrysogenum).